A 314-amino-acid polypeptide reads, in one-letter code: MKELDVITLLQEIRHLAQESNAVILAHYYQDSEIQDIADFIGDSLELSRKAATTTADVIVFCGVYFMAEVAKIINPAKKVLLPDLNAGCSLADSCDAESFKKFRELHKDCVSITYINSLAEVKAYSDIICTSSSAEKIIRQIPEEKQILFAPDKFLGAFLEKKTNRKMILWPGTCIVHESFSERELIDMMVRHDKAYVLAHPECPGHLLKYAHFIGSTTQLLKFSSDNPNSEFIVLTEEGIIHQMKKVSSGSTFYIVKTSDSGGCVSCSKCPHMRLNTLEKLYLCLKNGYPEITLDPEISSMAKRSLDAMLKMS.

The iminosuccinate site is built by His-27 and Ser-44. Cys-89 contacts [4Fe-4S] cluster. Iminosuccinate is bound by residues 115 to 117 (YIN) and Ser-132. [4Fe-4S] cluster is bound at residue Cys-175. Iminosuccinate contacts are provided by residues 201–203 (HPE) and Thr-218. Cys-271 provides a ligand contact to [4Fe-4S] cluster.

This sequence belongs to the quinolinate synthase family. Type 2 subfamily. [4Fe-4S] cluster is required as a cofactor.

The protein resides in the cytoplasm. It carries out the reaction iminosuccinate + dihydroxyacetone phosphate = quinolinate + phosphate + 2 H2O + H(+). The protein operates within cofactor biosynthesis; NAD(+) biosynthesis; quinolinate from iminoaspartate: step 1/1. Catalyzes the condensation of iminoaspartate with dihydroxyacetone phosphate to form quinolinate. The protein is Quinolinate synthase of Ehrlichia chaffeensis (strain ATCC CRL-10679 / Arkansas).